A 229-amino-acid chain; its full sequence is Transcriptional regulatory protein CreB (229 aa).

The 115-residue stretch at 5–119 (TVWLVEDEQG…EVCARVRTLL (115 aa)) folds into the Response regulatory domain. The residue at position 54 (aspartate 54) is a 4-aspartylphosphate. A DNA-binding region (ompR/PhoB-type) is located at residues 129–228 (SPVIRIGHFE…HRGMGYSLRG (100 aa)).

Phosphorylated by CreC.

It localises to the cytoplasm. In terms of biological role, member of the two-component regulatory system CreC/CreB involved in catabolic regulation. In Escherichia coli (strain K12), this protein is Transcriptional regulatory protein CreB (creB).